Here is a 201-residue protein sequence, read N- to C-terminus: Peptide deformylase (201 aa).

Residues 1–21 (MANHFSQLAKKSRTNGNAEKI) form a disordered region. Positions 121 and 163 each coordinate Fe cation. The active site involves Glu164. His167 provides a ligand contact to Fe cation.

It belongs to the polypeptide deformylase family. It depends on Fe(2+) as a cofactor.

The enzyme catalyses N-terminal N-formyl-L-methionyl-[peptide] + H2O = N-terminal L-methionyl-[peptide] + formate. Functionally, removes the formyl group from the N-terminal Met of newly synthesized proteins. Requires at least a dipeptide for an efficient rate of reaction. N-terminal L-methionine is a prerequisite for activity but the enzyme has broad specificity at other positions. The polypeptide is Peptide deformylase (Prochlorococcus marinus (strain AS9601)).